A 93-amino-acid polypeptide reads, in one-letter code: MARVTVEDAVNQIGNRFDMILVAARRARQIAVQGKDPMVEEENDKPTVIALREIELGLVTADTLDADERQTVREREAAEIAAVAAIAEGRNTI.

Belongs to the RNA polymerase subunit omega family. As to quaternary structure, the RNAP catalytic core consists of 2 alpha, 1 beta, 1 beta' and 1 omega subunit. When a sigma factor is associated with the core the holoenzyme is formed, which can initiate transcription.

The catalysed reaction is RNA(n) + a ribonucleoside 5'-triphosphate = RNA(n+1) + diphosphate. Promotes RNA polymerase assembly. Latches the N- and C-terminal regions of the beta' subunit thereby facilitating its interaction with the beta and alpha subunits. In Shewanella loihica (strain ATCC BAA-1088 / PV-4), this protein is DNA-directed RNA polymerase subunit omega.